The sequence spans 290 residues: Membrane protein insertase YidC (290 aa).

The N-terminal stretch at 1–19 (MKKKALLPLFLGIMVFLAG) is a signal peptide. Cys20 is lipidated: N-palmitoyl cysteine. Cys20 carries the S-diacylglycerol cysteine lipid modification. The next 5 membrane-spanning stretches (helical) occupy residues 56 to 76 (YGLAIIILVLVIRIILLPFML), 134 to 154 (MLGCLPMLIQLPIIMGLYFVL), 176 to 196 (PDIWITIIAGVLYFIQAYVSS), 207 to 224 (GYMMMVISPIMIIWISLS), and 229 to 251 (LGLYWSVSAAFLVVQTHFANIYY). The tract at residues 270–290 (HNGGSNKKGKNTQVVSKKKKK) is disordered.

The protein belongs to the OXA1/ALB3/YidC family. Type 2 subfamily.

It localises to the cell membrane. Its function is as follows. Required for the insertion and/or proper folding and/or complex formation of integral membrane proteins into the membrane. Involved in integration of membrane proteins that insert both dependently and independently of the Sec translocase complex, as well as at least some lipoproteins. This Staphylococcus aureus (strain Mu3 / ATCC 700698) protein is Membrane protein insertase YidC.